A 179-amino-acid chain; its full sequence is GTP-dependent dephospho-CoA kinase (179 aa).

D55, V57, D74, K76, and E128 together coordinate GTP.

It belongs to the GTP-dependent DPCK family.

The enzyme catalyses 3'-dephospho-CoA + GTP = GDP + CoA + H(+). It functions in the pathway cofactor biosynthesis; coenzyme A biosynthesis. Its function is as follows. Catalyzes the GTP-dependent phosphorylation of the 3'-hydroxyl group of dephosphocoenzyme A to form coenzyme A (CoA). The chain is GTP-dependent dephospho-CoA kinase from Saccharolobus islandicus (strain M.16.27) (Sulfolobus islandicus).